The following is a 514-amino-acid chain: 1-pyrroline-5-carboxylate dehydrogenase (514 aa).

Active-site residues include E286 and C320.

Belongs to the aldehyde dehydrogenase family. RocA subfamily.

The enzyme catalyses L-glutamate 5-semialdehyde + NAD(+) + H2O = L-glutamate + NADH + 2 H(+). It functions in the pathway amino-acid degradation; L-proline degradation into L-glutamate; L-glutamate from L-proline: step 2/2. The chain is 1-pyrroline-5-carboxylate dehydrogenase from Staphylococcus saprophyticus subsp. saprophyticus (strain ATCC 15305 / DSM 20229 / NCIMB 8711 / NCTC 7292 / S-41).